The primary structure comprises 392 residues: Stilbene synthase 1 (392 aa).

55 to 58 (KFNR) is a binding site for substrate. Cys164 is a catalytic residue. Residues Leu267 and 305–307 (GGP) contribute to the substrate site.

Belongs to the thiolase-like superfamily. Chalcone/stilbene synthases family. As to quaternary structure, homodimer. In leaves, expressed in palisade and spongy parenchyma cells and, to a lesser extent, in epidermal cells after induction.

Its subcellular location is the cytoplasm. The catalysed reaction is 4-coumaroyl-CoA + 3 malonyl-CoA + 3 H(+) = trans-resveratrol + 4 CO2 + 4 CoA. Its pathway is phytoalexin biosynthesis; 3,4',5-trihydroxystilbene biosynthesis; 3,4',5-trihydroxystilbene from trans-4-coumarate: step 2/2. In terms of biological role, mediates resistance to pathogens which are sensitive to stilbenes such as Botrytis cinerea, Eutypa lata and Plasmopora viticola by enhancing the production of phytoalexins. Confers resistance to Phytophthora palmivora when expressed in papaya. The polypeptide is Stilbene synthase 1 (VINST1) (Vitis vinifera (Grape)).